Reading from the N-terminus, the 503-residue chain is Transmembrane protein 184C (503 aa).

A run of 7 helical transmembrane segments spans residues 17–37 (LLIL…IWEF), 48–68 (VWFI…CGIL), 83–103 (IIRI…ALKY), 115–135 (ECYE…YLTI), 212–232 (YLVI…LLFY), 254–274 (VVFV…VGVI), and 287–307 (AVAT…AAIA). 2 disordered regions span residues 358–391 (PKKK…SPVG) and 479–503 (SPKP…STDS). Positions 373–388 (SSLLSASSQDSSKPSS) are enriched in low complexity. Residues 494 to 503 (PEGSDSSTDS) show a composition bias toward polar residues.

It belongs to the TMEM184 family.

The protein resides in the membrane. Possible tumor suppressor which may play a role in cell growth. The protein is Transmembrane protein 184C (Tmem184c) of Rattus norvegicus (Rat).